The following is a 429-amino-acid chain: Ribosomal RNA small subunit methyltransferase B (429 aa).

Residues 254 to 260 (CAAPGGK), Asp-277, Asp-303, and Asp-322 each bind S-adenosyl-L-methionine. Cys-375 acts as the Nucleophile in catalysis. Positions 397–419 (ALSETGTPDQPGQQNLPGGEEGD) are disordered. The span at 400–412 (ETGTPDQPGQQNL) shows a compositional bias: polar residues.

Belongs to the class I-like SAM-binding methyltransferase superfamily. RsmB/NOP family.

The protein localises to the cytoplasm. The catalysed reaction is cytidine(967) in 16S rRNA + S-adenosyl-L-methionine = 5-methylcytidine(967) in 16S rRNA + S-adenosyl-L-homocysteine + H(+). Functionally, specifically methylates the cytosine at position 967 (m5C967) of 16S rRNA. This Salmonella enteritidis PT4 (strain P125109) protein is Ribosomal RNA small subunit methyltransferase B.